A 357-amino-acid polypeptide reads, in one-letter code: Red-sensitive opsin (357 aa).

The Extracellular segment spans residues 1 to 49 (MGDQWGDAVFAARRRGDDTTREAAFTYTNSNNTKDPFEGPNYHIAPRWV). Asn31 is a glycosylation site (N-linked (GlcNAc...) asparagine). Residues 50 to 74 (YNLATCWMFFVVVASTVTNGLVLVA) traverse the membrane as a helical segment. Residues 75-86 (SAKFKKLRHPLN) lie on the Cytoplasmic side of the membrane. The helical transmembrane segment at 87–112 (WILVNLAIADLLETLLASTISVCNQF) threads the bilayer. The Extracellular portion of the chain corresponds to 113–126 (FGYFILGHPMCVFE). Cys123 and Cys200 are joined by a disulfide. Residues 127-146 (GFTVATCGIAGLWSLTVISW) form a helical membrane-spanning segment. Over 147–165 (ERWVVVCKPFGNVKFDGKM) the chain is Cytoplasmic. The helical transmembrane segment at 166–189 (ATAGIVFTWVWSAVWCAPPIFGWS) threads the bilayer. Residues 190–215 (RYWPHGLKTSCGPDVFSGSEDPGVQS) are Extracellular-facing. The helical transmembrane segment at 216–243 (YMIVLMITCCFIPLGIIILCYIAVWWAI) threads the bilayer. At 244 to 265 (RTVAQQQKDSESTQKAEKEVSR) the chain is on the cytoplasmic side. The chain crosses the membrane as a helical span at residues 266–289 (MVVVMIMAYCFCWGPYTFFACFAA). Over 290 to 297 (ANPGYAFH) the chain is Extracellular. The chain crosses the membrane as a helical span at residues 298–322 (PLAAAMPAYFAKSATIYNPVIYVFM). Lys309 bears the N6-(retinylidene)lysine mark. Topologically, residues 323 to 357 (NRQFRVCIMQLFGKKVDDGSEVSTSKTEVSSVAPA) are cytoplasmic.

Belongs to the G-protein coupled receptor 1 family. Opsin subfamily. Post-translationally, phosphorylated on some or all of the serine and threonine residues present in the C-terminal region. The color pigments are found in the cone photoreceptor cells.

It localises to the membrane. Its function is as follows. Visual pigments are the light-absorbing molecules that mediate vision. They consist of an apoprotein, opsin, covalently linked to cis-retinal. The chain is Red-sensitive opsin (R007) from Psalidodon fasciatus (Banded astyanax).